The primary structure comprises 92 residues: Large ribosomal subunit protein eL43 (92 aa).

The segment at 39 to 60 adopts a C4-type zinc-finger fold; that stretch reads CDFCGKYGMKRQAVGIWCCKGC.

This sequence belongs to the eukaryotic ribosomal protein eL43 family.

The chain is Large ribosomal subunit protein eL43 (RPL37a) from Ostreococcus tauri.